A 422-amino-acid polypeptide reads, in one-letter code: Tryptophan synthase beta chain (422 aa).

Residue Lys-111 is modified to N6-(pyridoxal phosphate)lysine.

Belongs to the TrpB family. As to quaternary structure, tetramer of two alpha and two beta chains. Requires pyridoxal 5'-phosphate as cofactor.

It catalyses the reaction (1S,2R)-1-C-(indol-3-yl)glycerol 3-phosphate + L-serine = D-glyceraldehyde 3-phosphate + L-tryptophan + H2O. It participates in amino-acid biosynthesis; L-tryptophan biosynthesis; L-tryptophan from chorismate: step 5/5. The beta subunit is responsible for the synthesis of L-tryptophan from indole and L-serine. The sequence is that of Tryptophan synthase beta chain from Pseudothermotoga lettingae (strain ATCC BAA-301 / DSM 14385 / NBRC 107922 / TMO) (Thermotoga lettingae).